The sequence spans 493 residues: Dipeptide permease D (493 aa).

13 helical membrane-spanning segments follow: residues 14–34, 49–69, 91–111, 138–158, 167–187, 212–232, 235–255, 267–287, 312–332, 344–364, 379–399, 413–433, and 458–478; these read VVALQIWEYFSFYGMRALLIL, ELFSAYCSLVYVTPILGGYLA, LVLGASEIAPTFLYLSLAIIV, GGFSLLYAAGNIGSIVAPIAC, WAMGFALAAIGMLAGLVIFLC, NWGWLLILLVAAPLLITVLFW, WSVYALIVATAIGLVVLAKIY, LGLIVTLTLFSMLFWAFAQQG, MFQSVNAFAVMLCGVVLAWLV, IWGKFALGLGLMSAGFCILTL, LMVLGLAVMGFAELFIDPVAM, VLTGIYMLLSGAIANYLAGVI, and VFEQITWGALACVGVVLLIWL.

The protein belongs to the major facilitator superfamily. Proton-dependent oligopeptide transporter (POT/PTR) (TC 2.A.17) family. DtpD subfamily.

The protein localises to the cell inner membrane. Probable proton-dependent permease that transports dipeptides. The protein is Dipeptide permease D of Salmonella typhimurium (strain 14028s / SGSC 2262).